Consider the following 436-residue polypeptide: UDP-N-acetylmuramate--L-alanine ligase (436 aa).

ATP is bound at residue 108 to 114 (GAHGKTS).

Belongs to the MurCDEF family.

Its subcellular location is the cytoplasm. The enzyme catalyses UDP-N-acetyl-alpha-D-muramate + L-alanine + ATP = UDP-N-acetyl-alpha-D-muramoyl-L-alanine + ADP + phosphate + H(+). It functions in the pathway cell wall biogenesis; peptidoglycan biosynthesis. Cell wall formation. This Bacillus cereus (strain ZK / E33L) protein is UDP-N-acetylmuramate--L-alanine ligase.